A 393-amino-acid polypeptide reads, in one-letter code: Phosphoglycerate kinase (393 aa).

Substrate contacts are provided by residues 21 to 23 (DIN), Arg36, 59 to 62 (HFGR), Arg114, and Arg147. Residues Lys197, Glu319, and 349-352 (GGDT) contribute to the ATP site.

The protein belongs to the phosphoglycerate kinase family. As to quaternary structure, monomer.

The protein resides in the cytoplasm. It catalyses the reaction (2R)-3-phosphoglycerate + ATP = (2R)-3-phospho-glyceroyl phosphate + ADP. It functions in the pathway carbohydrate degradation; glycolysis; pyruvate from D-glyceraldehyde 3-phosphate: step 2/5. The protein is Phosphoglycerate kinase of Dinoroseobacter shibae (strain DSM 16493 / NCIMB 14021 / DFL 12).